Reading from the N-terminus, the 406-residue chain is Dematin (406 aa).

Disordered stretches follow at residues 1–30 (MERLQKQPLTSPGSVSSSRDSSVPGSPSSI) and 78–333 (LPRS…DRGN). Residues 11–29 (SPGSVSSSRDSSVPGSPSS) show a composition bias toward low complexity. S16, S18, S26, S92, S96, S105, S110, S113, S157, and S227 each carry phosphoserine. Residues 105-114 (SPGTISQASA) are compositionally biased toward polar residues. Positions 217–228 (EEEEEEEDDDSG) are enriched in acidic residues. Positions 225–309 (DDSGEEMKAL…SRLQSTDFSP (85 aa)) are interaction with RASGRF2. Composition is skewed to basic and acidic residues over residues 229–243 (EEMKALRERQREELS) and 253–262 (ILKEEMEKSL). S270, S280, S290, S304, S316, S334, S373, and S384 each carry phosphoserine. The span at 282-323 (HAGTSKSSSLPAYGRTTLSRLQSTDFSPSGSEAESPGLQNGE) shows a compositional bias: polar residues. An HP domain is found at 338 to 406 (VLEQKIYPYE…NELKKKASLF (69 aa)). S404 is modified (phosphoserine; by PKA).

It belongs to the villin/gelsolin family. As to quaternary structure, monomeric; under reducing conditions. Self-associates. Exists under oxidizing condition as a trimer linked by disulfide bonds. Found in a complex with DMTN, F-actin and spectrin. Found in a complex with ADD2, DMTN and SLC2A1. Interacts with F-actin, ITPKB and spectrin. Interacts with SLC2A1 (via C-terminus cytoplasmic region). Interacts with RASGRF2. Phosphorylated. Phosphorylation at Ser-404 by PKA causes the C-terminal headpiece domain to associate with the N-terminal core domain, and leads to the inhibition of its actin bundling activity.

The protein resides in the cytoplasm. Its subcellular location is the cytosol. It is found in the perinuclear region. The protein localises to the cytoskeleton. It localises to the cell membrane. The protein resides in the membrane. Its subcellular location is the endomembrane system. It is found in the cell projection. In terms of biological role, membrane-cytoskeleton-associated protein with F-actin-binding activity that induces F-actin bundles formation and stabilization. Its F-actin-bundling activity is reversibly regulated upon its phosphorylation by the cAMP-dependent protein kinase A (PKA). Binds to the erythrocyte membrane glucose transporter-1 SLC2A1/GLUT1, and hence stabilizes and attaches the spectrin-actin network to the erythrocytic plasma membrane. Plays a role in maintaining the functional integrity of PKA-activated erythrocyte shape and the membrane mechanical properties. Also plays a role as a modulator of actin dynamics in fibroblasts; acts as a negative regulator of the RhoA activation pathway. In platelets, functions as a regulator of internal calcium mobilization across the dense tubular system that affects platelet granule secretion pathways and aggregation. Also required for the formation of a diverse set of cell protrusions, such as filopodia and lamellipodia, necessary for platelet cell spreading, motility and migration. Acts as a tumor suppressor and inhibits malignant cell transformation. The chain is Dematin (DMTN) from Bos taurus (Bovine).